Here is a 100-residue protein sequence, read N- to C-terminus: Urease subunit gamma (100 aa).

This sequence belongs to the urease gamma subunit family. As to quaternary structure, heterotrimer of UreA (gamma), UreB (beta) and UreC (alpha) subunits. Three heterotrimers associate to form the active enzyme.

Its subcellular location is the cytoplasm. It catalyses the reaction urea + 2 H2O + H(+) = hydrogencarbonate + 2 NH4(+). It participates in nitrogen metabolism; urea degradation; CO(2) and NH(3) from urea (urease route): step 1/1. The polypeptide is Urease subunit gamma (Rhodopseudomonas palustris (strain ATCC BAA-98 / CGA009)).